The primary structure comprises 930 residues: G patch domain-containing protein 1 (930 aa).

The span at 1–12 (MAALDSDSDEDL) shows a compositional bias: acidic residues. Disordered stretches follow at residues 1-41 (MAAL…TVRD) and 170-209 (GVGP…EDDD). Ala-2 carries the post-translational modification N-acetylalanine. Phosphoserine occurs at positions 6 and 8. The 47-residue stretch at 152 to 198 (KLSVGFELLRKMGWKEGQGVGPRVKRKARRQKPDPGVKIYGCALPPG) folds into the G-patch domain. Residue Lys-313 forms a Glycyl lysine isopeptide (Lys-Gly) (interchain with G-Cter in SUMO2) linkage. A Phosphoserine modification is found at Ser-358. 4 disordered regions span residues 400–420 (GKAG…SKRG), 465–486 (SLAQ…GHSS), 566–596 (SSRF…DKQS), and 654–930 (PEPA…LRRQ). The segment covering 465 to 478 (SLAQSASSSRAQAS) has biased composition (low complexity). Composition is skewed to basic and acidic residues over residues 582–593 (EVPRDQENDVSD) and 674–695 (GSDK…KEDS). Ser-715 is subject to Phosphoserine. Residues 719-737 (SKEEQAPEPRPDTTVDKAV) are compositionally biased toward basic and acidic residues. Acidic residues predominate over residues 768–777 (SEEEQDDSED). Positions 851–886 (KPKKSKERHKSKKEHRRKREKKKKHKKHKHKSKQKN) are enriched in basic residues. The segment covering 894–903 (SSESTDSSDS) has biased composition (low complexity). Residues 921–930 (RLKCLPLRRQ) show a composition bias toward basic residues.

The protein belongs to the GPATCH1 family.

This is G patch domain-containing protein 1 (Gpatch1) from Mus musculus (Mouse).